Consider the following 304-residue polypeptide: Tyrosine recombinase XerC (304 aa).

The 87-residue stretch at 2 to 88 (ENVKNFVKLF…ALRSFYKFLM (87 aa)) folds into the Core-binding (CB) domain. A Tyr recombinase domain is found at 109-294 (RIPKFLYQKE…SKEMLRNTYM (186 aa)). Residues Arg-149, Lys-173, His-246, Arg-249, and His-272 contribute to the active site. Tyr-281 functions as the O-(3'-phospho-DNA)-tyrosine intermediate in the catalytic mechanism.

It belongs to the 'phage' integrase family. XerC subfamily. In terms of assembly, forms a cyclic heterotetrameric complex composed of two molecules of XerC and two molecules of XerD.

The protein localises to the cytoplasm. Functionally, site-specific tyrosine recombinase, which acts by catalyzing the cutting and rejoining of the recombining DNA molecules. The XerC-XerD complex is essential to convert dimers of the bacterial chromosome into monomers to permit their segregation at cell division. It also contributes to the segregational stability of plasmids. The protein is Tyrosine recombinase XerC of Bacillus subtilis (strain 168).